The primary structure comprises 977 residues: Mineralocorticoid receptor (977 aa).

Over residues 1 to 19 (METKGYHSRPEGLDMERRW) the composition is skewed to basic and acidic residues. Disordered stretches follow at residues 1–37 (METKGYHSRPEGLDMERRWGQVSQPVDRPSLGPAERT) and 231–288 (QGTP…VSSP). Residues 1 to 601 (METKGYHSRP…STGSSRPSKI (601 aa)) are modulating. Polar residues predominate over residues 231 to 243 (QGTPLTCSPTVDN). Phosphoserine is present on residues S250, S259, S283, S287, and S299. The segment covering 259 to 288 (SPLSSPLSSMKSPISSPPSHCSVKSPVSSP) has biased composition (low complexity). 2 disordered regions span residues 305 to 327 (NSRCSVSSPSKANNRSTLSSPAA) and 344 to 368 (SGASVGSSATRDVIPSPDTHEKGAH). Positions 602, 605, 619, 622, 638, 644, 654, and 657 each coordinate Zn(2+). 2 consecutive NR C4-type zinc fingers follow at residues 602–622 (CLVCGDGASGCHYGVVTCGSC) and 638–662 (CAGRNDCIIDKIRRKNCPACRLQKC). Residues 602-667 (CLVCGDGASG…RLQKCLQAGM (66 aa)) constitute a DNA-binding region (nuclear receptor). Positions 668 to 718 (NLGARKSKKLGKLKGLHEEQPQQPPPPQSPEEGTTYIAPAKEPSVNTALVP) are hinge. The segment at 682-703 (GLHEEQPQQPPPPQSPEEGTTY) is disordered. An NR LBD domain is found at 719 to 957 (QLSSISRALT…EFPAMLVEII (239 aa)). N763 and Q769 together coordinate 21-hydroxyprogesterone. Aldosterone-binding residues include N763 and Q769. Progesterone contacts are provided by N763 and Q769. The interval 775–778 (KWAK) is important for coactivator binding. 2 residues coordinate 21-hydroxyprogesterone: R810 and T938. R810 and T938 together coordinate aldosterone. Positions 810 and 938 each coordinate progesterone.

Belongs to the nuclear hormone receptor family. NR3 subfamily.

The protein localises to the cytoplasm. Its subcellular location is the nucleus. Functionally, receptor for both mineralocorticoids (MC) such as aldosterone and glucocorticoids (GC) such as corticosterone or cortisol. Binds to mineralocorticoid response elements (MRE) and transactivates target genes. The effect of MC is to increase ion and water transport and thus raise extracellular fluid volume and blood pressure and lower potassium levels. The sequence is that of Mineralocorticoid receptor (NR3C2) from Tupaia belangeri (Common tree shrew).